A 145-amino-acid polypeptide reads, in one-letter code: Large ribosomal subunit protein uL13 (145 aa).

The protein belongs to the universal ribosomal protein uL13 family. In terms of assembly, part of the 50S ribosomal subunit.

Its function is as follows. This protein is one of the early assembly proteins of the 50S ribosomal subunit, although it is not seen to bind rRNA by itself. It is important during the early stages of 50S assembly. The protein is Large ribosomal subunit protein uL13 of Exiguobacterium sibiricum (strain DSM 17290 / CCUG 55495 / CIP 109462 / JCM 13490 / 255-15).